We begin with the raw amino-acid sequence, 586 residues long: MRKTKIVCTIGPASESPELLEQLIEAGMNVARLNFSHGNHAEHKARIDSIRKVAREKGKVVGILLDTKGPEIRTHSMMNGKLELVTGQKIDISMTQVEGNNDVFSVSYDKLIEDVNEGSVILLDDGLIQLEVTGKDVARGLIHTLIINSGSLSNNKGVNIPGVSVQLPGMTEKDAEDILFGIREGVDFIAASFVRRASDVMEIRALLENNNGSNLQIIPKIENQEGVDNIDEILNVSDGLMVARGDLGVEIPPEEVPLVQKNLIEKCNQAGKPVITATQMLDSMQRNPRPTRAEASDVANAIFDGTDAIMLSGETAAGIYPVESVQTMDRIALTTEAAIDYRSVVSTRRREKHGNMTEAIGQAAAYTAINLKVKAVLAPTESGHTAKMIAKYRPGCPVIAVTSSEMCSRKLSLIWGVYPIVGKKASSIDEILQESVEESVKHQYVGHGDVVIITAGVPVGEAGTTNLMKIHVIGDLLARGQGIGKDVAYGRTVVAKNAAEALAYDTEGAILVTNASDRDMMPAIEKCAGLITEEGGLTSHGAIVGLSLGIPIIVGVENATELIQHGKEITMDAESGVIYNGHASVL.

Position 32 (arginine 32) interacts with substrate. 4 residues coordinate K(+): asparagine 34, serine 36, aspartate 66, and threonine 67. 34 to 37 (NFSH) serves as a coordination point for ATP. ATP-binding residues include arginine 73 and lysine 156. Position 222 (glutamate 222) interacts with Mg(2+). The substrate site is built by glycine 245, aspartate 246, and threonine 278. Aspartate 246 provides a ligand contact to Mg(2+).

This sequence belongs to the pyruvate kinase family. In the C-terminal section; belongs to the PEP-utilizing enzyme family. As to quaternary structure, homotetramer. The cofactor is Mg(2+). K(+) serves as cofactor.

The enzyme catalyses pyruvate + ATP = phosphoenolpyruvate + ADP + H(+). The protein operates within carbohydrate degradation; glycolysis; pyruvate from D-glyceraldehyde 3-phosphate: step 5/5. This Sporosarcina psychrophila (Bacillus psychrophilus) protein is Pyruvate kinase (pyk).